We begin with the raw amino-acid sequence, 141 residues long: Hemoglobin subunit alpha-A (141 aa).

The Globin domain occupies 1 to 141; the sequence is VLSGSDKTNV…VGNVLTAKYR (141 aa). His-58 is a binding site for O2. His-87 contributes to the heme b binding site.

The protein belongs to the globin family. In terms of assembly, heterotetramer of two alpha chains and two beta chains. As to expression, red blood cells.

In terms of biological role, involved in oxygen transport from the lung to the various peripheral tissues. The protein is Hemoglobin subunit alpha-A (HBAA) of Vultur gryphus (Andean condor).